Consider the following 61-residue polypeptide: Protein transport protein Sec61 subunit beta (61 aa).

The Cytoplasmic segment spans residues Met-1–Pro-35. A helical transmembrane segment spans residues Thr-36–Gly-56. Residues Lys-57 to Ser-61 are Extracellular-facing.

Belongs to the SEC61-beta family. In terms of assembly, the SEC61 channel-forming translocon complex.

It is found in the endoplasmic reticulum membrane. Functionally, component of SEC61 channel-forming translocon complex that mediates transport of signal peptide-containing precursor polypeptides across the endoplasmic reticulum (ER). Forms a ribosome receptor and a gated pore in the ER membrane, both functions required for cotranslational translocation of nascent polypeptides. The polypeptide is Protein transport protein Sec61 subunit beta (sec61b) (Dictyostelium discoideum (Social amoeba)).